The chain runs to 454 residues: tRNA modification GTPase MnmE (454 aa).

The (6S)-5-formyl-5,6,7,8-tetrahydrofolate site is built by Arg-23, Glu-80, and Lys-120. The region spanning 216-377 is the TrmE-type G domain; sequence GMKVVIAGRP…LRDHLKQSMG (162 aa). Residue Asn-226 coordinates K(+). GTP-binding positions include 226 to 231, 245 to 251, 270 to 273, 335 to 338, and 358 to 360; these read NAGKSS, TAIAGTT, DTAG, NKAD, and SAR. Ser-230 provides a ligand contact to Mg(2+). Residues Thr-245, Ile-247, and Thr-250 each coordinate K(+). Thr-251 provides a ligand contact to Mg(2+). Lys-454 is a binding site for (6S)-5-formyl-5,6,7,8-tetrahydrofolate.

Belongs to the TRAFAC class TrmE-Era-EngA-EngB-Septin-like GTPase superfamily. TrmE GTPase family. As to quaternary structure, homodimer. Heterotetramer of two MnmE and two MnmG subunits. The cofactor is K(+).

The protein resides in the cytoplasm. Its function is as follows. Exhibits a very high intrinsic GTPase hydrolysis rate. Involved in the addition of a carboxymethylaminomethyl (cmnm) group at the wobble position (U34) of certain tRNAs, forming tRNA-cmnm(5)s(2)U34. This Pectobacterium atrosepticum (strain SCRI 1043 / ATCC BAA-672) (Erwinia carotovora subsp. atroseptica) protein is tRNA modification GTPase MnmE.